The primary structure comprises 784 residues: Transcription factor E4F1 (784 aa).

The segment at glycine 41–alanine 85 is required for ubiquitin ligase activity. The residue at position 50 (serine 50) is a Phosphoserine. The tract at residues leucine 184 to leucine 263 is mediates dimerization, DNA-binding, transcription repression of CCNA2 and interaction with HMGA2. 2 C2H2-type zinc fingers span residues tyrosine 192–histidine 214 and histidine 220–histidine 242. The C2H2-type 3; degenerate zinc finger occupies tyrosine 248–proline 272. The segment at asparagine 369–valine 566 is mediates interaction with CDKN2A. C2H2-type zinc fingers lie at residues histidine 435–histidine 457, phenylalanine 463–histidine 485, phenylalanine 491–histidine 513, tyrosine 519–histidine 541, and histidine 547–histidine 569. An interaction with BMI1 region spans residues histidine 435–glycine 599. The tract at residues cysteine 521–cysteine 580 is mediates interaction with TP53. The segment at phenylalanine 575–lysine 597 adopts a C2H2-type 9; degenerate zinc-finger fold. Residues phenylalanine 575–lysine 597 form a mediates interaction with RASSF1 region.

Homodimer; binds DNA as a dimer. Forms a complex with CDKN2A and TP53. Interactions with TP53, RB1, ANP32A, BMI1 and FHL2 regulate E4F1 activity. Interacts with HDAC1, HMGA2 and RASSF1. As to quaternary structure, (Microbial infection) Interacts with HBV protein X. Post-translationally, proteolytic cleavage produces a 50 kDa N-terminal peptide (p50E4F) which has a DNA-binding activity and activates transcription in presence of the adenoviral E1A protein. The major full-length protein (p120E4F) functions as a repressor of transcription. In terms of processing, phosphorylated; p120E4F and p50E4F are both phosphorylated. Phosphorylation is cell cycle-dependent and differentially regulates DNA-binding activity and function of both forms. May be sumoylated by UBE2I upon interaction with CDKN2A. In terms of tissue distribution, ubiquitously expressed.

The protein resides in the nucleus. It localises to the nucleoplasm. The protein localises to the cytoplasm. It carries out the reaction S-ubiquitinyl-[E2 ubiquitin-conjugating enzyme]-L-cysteine + [acceptor protein]-L-lysine = [E2 ubiquitin-conjugating enzyme]-L-cysteine + N(6)-ubiquitinyl-[acceptor protein]-L-lysine.. It participates in protein modification; protein ubiquitination. In terms of biological role, may function as a transcriptional repressor. May also function as a ubiquitin ligase mediating ubiquitination of chromatin-associated TP53. Functions in cell survival and proliferation through control of the cell cycle. Functions in the p53 and pRB tumor suppressor pathways and regulates the cyclin CCNA2 transcription. Its function is as follows. Identified as a cellular target of the adenoviral oncoprotein E1A, it is required for both transcriptional activation and repression of viral genes. The polypeptide is Transcription factor E4F1 (E4F1) (Homo sapiens (Human)).